A 594-amino-acid chain; its full sequence is Probable Xaa-Pro aminopeptidase P (594 aa).

Residues Asp-391, Asp-402, Glu-500, and Glu-514 each coordinate Mn(2+).

This sequence belongs to the peptidase M24B family. Mn(2+) serves as cofactor.

The enzyme catalyses Release of any N-terminal amino acid, including proline, that is linked to proline, even from a dipeptide or tripeptide.. Its function is as follows. Catalyzes the removal of a penultimate prolyl residue from the N-termini of peptides. This chain is Probable Xaa-Pro aminopeptidase P (ampp), found in Pyrenophora tritici-repentis (strain Pt-1C-BFP) (Wheat tan spot fungus).